The chain runs to 562 residues: RNA N(6)-adenosine-methyltransferase METTL16 (562 aa).

An RNA-binding region spans residues 17–20 (PPDF). R82, G110, S114, E133, T164, and N184 together coordinate S-adenosyl-L-methionine. The segment at 163-167 (KTLLM) is K-loop. 3 RNA-binding regions span residues 199 to 211 (SRNPRRPPPSSVN), 250 to 254 (GKKCS), and 277 to 283 (QGRTMRW). A VCR 1 region spans residues 289–400 (FYDDVTVPSP…QLREVPRAPE (112 aa)). Phosphoserine is present on S329. A compositionally biased stretch (basic and acidic residues) spans 402–413 (VIQALEEKKPTP). Residues 402 to 498 (VIQALEEKKP…DQEASEQFGS (97 aa)) are disordered. Over residues 458-467 (ENPEPTEDER) the composition is skewed to acidic residues. T463 is subject to Phosphothreonine. Residues 480-496 (CQGSSNGAQDQEASEQF) are compositionally biased toward polar residues. A VCR 2 region spans residues 514-562 (YLFKCLINVKKEVDDALVEMHWVEGQNRDLMNQLCTYIRNQIFRLVAVN).

Belongs to the methyltransferase superfamily. METTL16/RlmF family. In terms of assembly, interacts with MEPCE. Interacts with LARP7.

It is found in the nucleus. The protein localises to the cytoplasm. It catalyses the reaction adenosine in U6 snRNA + S-adenosyl-L-methionine = N(6)-methyladenosine in U6 snRNA + S-adenosyl-L-homocysteine + H(+). The enzyme catalyses an adenosine in mRNA + S-adenosyl-L-methionine = an N(6)-methyladenosine in mRNA + S-adenosyl-L-homocysteine + H(+). Methyltransferase activity is autoinhibited by the K-loop region that blocks S-adenosyl-L-methionine-binding. Upon activation, K-loop changes conformation, allowing S-adenosyl-L-methionine-binding and subsequent methyltransferase activity. mRNA N6-adenosine-methyltransferase activity is inhibited by zinc. Its function is as follows. RNA N6-methyltransferase that methylates adenosine residues at the N(6) position of a subset of RNAs and is involved in S-adenosyl-L-methionine homeostasis by regulating expression of MAT2A transcripts. Able to N6-methylate a subset of mRNAs and U6 small nuclear RNAs (U6 snRNAs). In contrast to the METTL3-METTL14 heterodimer, only able to methylate a limited number of RNAs: requires both a 5'UACAGAGAA-3' nonamer sequence and a specific RNA structure. Plays a key role in S-adenosyl-L-methionine homeostasis by mediating N6-methylation of MAT2A mRNAs, altering splicing of MAT2A transcripts: in presence of S-adenosyl-L-methionine, binds the 3'-UTR region of MAT2A mRNA and specifically N6-methylates the first hairpin of MAT2A mRNA, preventing recognition of their 3'-splice site by U2AF1/U2AF35, thereby inhibiting splicing and protein production of S-adenosylmethionine synthase. In S-adenosyl-L-methionine-limiting conditions, binds the 3'-UTR region of MAT2A mRNA but stalls due to the lack of a methyl donor, preventing N6-methylation and promoting expression of MAT2A. In addition to mRNAs, also able to mediate N6-methylation of U6 small nuclear RNA (U6 snRNA): specifically N6-methylates adenine in position 43 of U6 snRNAs. Also able to bind various lncRNAs, such as 7SK snRNA (7SK RNA) or 7SL RNA. Specifically binds the 3'-end of the MALAT1 long non-coding RNA. In Homo sapiens (Human), this protein is RNA N(6)-adenosine-methyltransferase METTL16.